A 442-amino-acid polypeptide reads, in one-letter code: D-serine dehydratase (442 aa).

Residue Lys-118 is modified to N6-(pyridoxal phosphate)lysine.

This sequence belongs to the serine/threonine dehydratase family. DsdA subfamily. Monomer. Pyridoxal 5'-phosphate is required as a cofactor.

The catalysed reaction is D-serine = pyruvate + NH4(+). This is D-serine dehydratase from Escherichia coli (strain 55989 / EAEC).